Here is a 550-residue protein sequence, read N- to C-terminus: Arginine--tRNA ligase (550 aa).

The 'HIGH' region signature appears at 130-140 (ANPTGPIHLGG).

It belongs to the class-I aminoacyl-tRNA synthetase family. As to quaternary structure, monomer.

The protein resides in the cytoplasm. It carries out the reaction tRNA(Arg) + L-arginine + ATP = L-arginyl-tRNA(Arg) + AMP + diphosphate. This Corynebacterium efficiens (strain DSM 44549 / YS-314 / AJ 12310 / JCM 11189 / NBRC 100395) protein is Arginine--tRNA ligase.